A 31-amino-acid chain; its full sequence is Aspartate racemase (31 aa).

Residues 1–31 (PVAPEYLFKKEEDKGANKEEEEVAPELGIRA) form a disordered region. Residues 7–18 (LFKKEEDKGANK) show a composition bias toward basic and acidic residues.

This sequence belongs to the aspartate/glutamate racemases family. Requires pyridoxal 5'-phosphate as cofactor.

The catalysed reaction is L-aspartate = D-aspartate. Inhibited by hydroxylamine, aminooxyacetate, phenylhydrazine and sodium borohydride. In terms of biological role, highly specific toward aspartate and entirely inactive on glutamate, alanine and serine. The polypeptide is Aspartate racemase (Anadara broughtonii (Blood clam)).